A 219-amino-acid polypeptide reads, in one-letter code: Probable GTP-binding protein EngB (219 aa).

The region spanning 33–217 is the EngB-type G domain; it reads GPLEIAFAGR…RAAICETVGH (185 aa). Residues 41 to 48, 68 to 72, 95 to 98, 162 to 165, and 196 to 198 contribute to the GTP site; these read GRSNVGKS, GRTQE, DMPG, TKTD, and TSS. Ser-48 and Thr-70 together coordinate Mg(2+).

It belongs to the TRAFAC class TrmE-Era-EngA-EngB-Septin-like GTPase superfamily. EngB GTPase family. It depends on Mg(2+) as a cofactor.

Its function is as follows. Necessary for normal cell division and for the maintenance of normal septation. The protein is Probable GTP-binding protein EngB of Allorhizobium ampelinum (strain ATCC BAA-846 / DSM 112012 / S4) (Agrobacterium vitis (strain S4)).